The sequence spans 73 residues: Small ribosomal subunit protein bS21 (73 aa).

The protein belongs to the bacterial ribosomal protein bS21 family.

The protein is Small ribosomal subunit protein bS21 of Parvibaculum lavamentivorans (strain DS-1 / DSM 13023 / NCIMB 13966).